Consider the following 415-residue polypeptide: Phosphopentomutase (415 aa).

Mn(2+)-binding residues include Asp10, Asp313, His318, Asp354, His355, and His366.

Belongs to the phosphopentomutase family. It depends on Mn(2+) as a cofactor.

It localises to the cytoplasm. It carries out the reaction 2-deoxy-alpha-D-ribose 1-phosphate = 2-deoxy-D-ribose 5-phosphate. It catalyses the reaction alpha-D-ribose 1-phosphate = D-ribose 5-phosphate. It participates in carbohydrate degradation; 2-deoxy-D-ribose 1-phosphate degradation; D-glyceraldehyde 3-phosphate and acetaldehyde from 2-deoxy-alpha-D-ribose 1-phosphate: step 1/2. In terms of biological role, isomerase that catalyzes the conversion of deoxy-ribose 1-phosphate (dRib-1-P) and ribose 1-phosphate (Rib-1-P) to deoxy-ribose 5-phosphate (dRib-5-P) and ribose 5-phosphate (Rib-5-P), respectively. In Psychromonas ingrahamii (strain DSM 17664 / CCUG 51855 / 37), this protein is Phosphopentomutase.